A 371-amino-acid polypeptide reads, in one-letter code: Probable RNA 3'-terminal phosphate cyclase-like protein (371 aa).

The protein belongs to the RNA 3'-terminal cyclase family. Type 2 subfamily. Part of the small subunit (SSU) processome, composed of more than 70 proteins and the RNA chaperone small nucleolar RNA (snoRNA) U3.

Its subcellular location is the nucleus. It is found in the nucleolus. Part of the small subunit (SSU) processome, first precursor of the small eukaryotic ribosomal subunit. During the assembly of the SSU processome in the nucleolus, many ribosome biogenesis factors, an RNA chaperone and ribosomal proteins associate with the nascent pre-rRNA and work in concert to generate RNA folding, modifications, rearrangements and cleavage as well as targeted degradation of pre-ribosomal RNA by the RNA exosome. Does not have cyclase activity. The chain is Probable RNA 3'-terminal phosphate cyclase-like protein (rcl1) from Dictyostelium discoideum (Social amoeba).